A 413-amino-acid chain; its full sequence is Low-salt glycan biosynthesis hexosyltransferase Agl6 (413 aa).

The interval 1 to 27 (MSTRSQSESPVDAPQQGATNGQSASDI) is disordered. Residues 16 to 25 (QGATNGQSAS) show a composition bias toward polar residues. Transmembrane regions (helical) follow at residues 270–290 (LFSAPGFGLSVIGVLALVLAW), 304–324 (TGIGGGLLTLAGFQLMLFGAF), 355–375 (IGSVVLLCGLAYGGLLAFTWV), and 389–409 (VVATVAVVIGLQMVFGSFLLG).

Belongs to the glycosyltransferase 2 family.

The protein resides in the membrane. The protein operates within protein modification; protein glycosylation. Its pathway is cell surface structure biogenesis; S-layer biogenesis. Hexosyltransferase involved in N-glycan biosynthetic pathway that takes place under low-salt conditions (1.75 M instead of 3.4 M). Participates in the formation of the tetrasaccharide present at 'Asn-532' of S-layer glycoprotein Csg, consisting of a sulfated hexose, 2 hexoses and rhamnose. Together with Agl5, mediates the addition of sugars 1 and 2 to dolichol phosphate in the tetrasaccharide. This Haloferax volcanii (strain ATCC 29605 / DSM 3757 / JCM 8879 / NBRC 14742 / NCIMB 2012 / VKM B-1768 / DS2) (Halobacterium volcanii) protein is Low-salt glycan biosynthesis hexosyltransferase Agl6 (agl6).